We begin with the raw amino-acid sequence, 630 residues long: METTPLNSQKQLSACKDGEDCQENGVLQKVVPTPGDKVESGQISNGYSAVPSPGAGDDTRHSIPAATTTLVAELHQGERETWGKKVDFLLSVIGYAVDLGNVWRFPYICYQNGGGAFLIPYTIMAIFGGIPLFYMELALGQYHRNGCISIWRKICPIFKGIGYAICIIAFYIASYYNTIMAWALYYLISSFTDQLPWTSCKNSWNTGNCTNYFSEDNITWTLHSTSPAEEFYTRHVLQIHRSKGLQDLGGISWQLALCIMLIFTVIYFSIWKGVKTSGKVVWVTATFPYIILSVLLVRGATLPGAWRGVLFYLKPNWQKLLETGVWIDAAAQIFFSLGPGFGVLLAFASYNKFNNNCYQDALVTSVVNCMTSFVSGFVIFTVLGYMAEMRNEDVSEVAKDAGPSLLFITYAEAIANMPASTFFAIIFFLMLITLGLDSTFAGLEGVITAVLDEFPHIWAKRREWFVLAVVITCFFGSLVTLTFGGAYVVKLLEEYATGPAVLTVALIEAVAVSWFYGITQFCRDVKEMLGFSPGWFWRICWVAISPLFLLFIICSFLMSPPQLRLFQYNYPHWSIILGYCIGTSSFVCIPTYIAYRLISTPGTFKERIIKSITPETPTEIPCGDVRLNAV.

At 1 to 87 (METTPLNSQK…ERETWGKKVD (87 aa)) the chain is on the cytoplasmic side. Residues 31-59 (VPTPGDKVESGQISNGYSAVPSPGAGDDT) form a disordered region. Residue Tyr47 is modified to Phosphotyrosine. Residues 88–112 (FLLSVIGYAVDLGNVWRFPYICYQN) form a helical membrane-spanning segment. The Na(+) site is built by Gly94, Ala96, Val97, Asp98, and Asn101. Asp98 lines the serotonin pocket. The Extracellular segment spans residues 113 to 115 (GGG). A helical transmembrane segment spans residues 116–135 (AFLIPYTIMAIFGGIPLFYM). Over 136–160 (ELALGQYHRNGCISIWRKICPIFKG) the chain is Cytoplasmic. Tyr142 is modified (phosphotyrosine). Residues 161 to 186 (IGYAICIIAFYIASYYNTIMAWALYY) form a helical membrane-spanning segment. At 187–252 (LISSFTDQLP…KGLQDLGGIS (66 aa)) the chain is on the extracellular side. Cys200 and Cys209 are joined by a disulfide. N-linked (GlcNAc...) asparagine glycosylation is found at Asn208 and Asn217. Residues 253–271 (WQLALCIMLIFTVIYFSIW) form a helical membrane-spanning segment. Over 272–277 (KGVKTS) the chain is Cytoplasmic. Phosphothreonine is present on Thr276. Residues 278-297 (GKVVWVTATFPYIILSVLLV) form a helical membrane-spanning segment. The Extracellular segment spans residues 298–324 (RGATLPGAWRGVLFYLKPNWQKLLETG). Residues 325–347 (VWIDAAAQIFFSLGPGFGVLLAF) traverse the membrane as a helical segment. Ser336 contributes to the Na(+) binding site. Residues 348–360 (ASYNKFNNNCYQD) are Cytoplasmic-facing. Residues 361–380 (ALVTSVVNCMTSFVSGFVIF) form a helical membrane-spanning segment. Asn368 lines the Na(+) pocket. Over 381-421 (TVLGYMAEMRNEDVSEVAKDAGPSLLFITYAEAIANMPAST) the chain is Extracellular. Residues 422-443 (FFAIIFFLMLITLGLDSTFAGL) form a helical membrane-spanning segment. The Na(+) site is built by Leu434, Asp437, and Ser438. A serotonin-binding site is contributed by Thr439. Residues 444-463 (EGVITAVLDEFPHIWAKRRE) lie on the Cytoplasmic side of the membrane. A helical transmembrane segment spans residues 464–483 (WFVLAVVITCFFGSLVTLTF). At 484-494 (GGAYVVKLLEE) the chain is on the extracellular side. Serotonin-binding residues include Glu494 and Tyr495. Residues 495 to 516 (YATGPAVLTVALIEAVAVSWFY) traverse the membrane as a helical segment. Residues 517-538 (GITQFCRDVKEMLGFSPGWFWR) are Cytoplasmic-facing. The chain crosses the membrane as a helical span at residues 539-558 (ICWVAISPLFLLFIICSFLM). Positions 556 and 559 each coordinate serotonin. Residues 559–574 (SPPQLRLFQYNYPHWS) are Extracellular-facing. Residues 575-595 (IILGYCIGTSSFVCIPTYIAY) traverse the membrane as a helical segment. Residues 596 to 630 (RLISTPGTFKERIIKSITPETPTEIPCGDVRLNAV) lie on the Cytoplasmic side of the membrane. The tract at residues 616 to 624 (TPTEIPCGD) is interaction with RAB4A.

This sequence belongs to the sodium:neurotransmitter symporter (SNF) (TC 2.A.22) family. SLC6A4 subfamily. In terms of assembly, monomer or homooligomer. Interacts (via C-terminus) with SCAMP2; the interaction is direct and retains transporter molecules intracellularly. Interacts with filamentous actin and STX1A. Interacts (via the N-terminus) with STX1A (via the H3 domain); this interaction regulates SLC4A6 channel conductance. Interacts with SEC23A, SEC24C and PATJ. Interacts with NOS1; the interaction may diminish the cell surface localization of SERT in the brain and, correspondingly, reduce serotonin reuptake. Interacts with TGFB1I1. Interacts with ITGAV:ITGB3. Interacts (via C-terminus) with ITGB3; this interaction regulates SLC6A4 trafficking. In terms of processing, phosphorylation at Thr-276 increases 5-HT uptake and is required for cGMP-mediated SERT regulation.

It localises to the cell membrane. Its subcellular location is the endomembrane system. The protein localises to the endosome membrane. It is found in the synapse. The protein resides in the cell junction. It localises to the focal adhesion. Its subcellular location is the cell projection. The protein localises to the neuron projection. The enzyme catalyses serotonin(out) + K(+)(in) + Na(+)(out) + H(+)(in) = serotonin(in) + K(+)(out) + Na(+)(in) + H(+)(out). Serotonin transporter that cotransports serotonin with one Na(+) ion in exchange for one K(+) ion and possibly one proton in an overall electroneutral transport cycle. Transports serotonin across the plasma membrane from the extracellular compartment to the cytosol thus limiting serotonin intercellular signaling. Essential for serotonin homeostasis in the central nervous system. In the developing somatosensory cortex, acts in glutamatergic neurons to control serotonin uptake and its trophic functions accounting for proper spatial organization of cortical neurons and elaboration of sensory circuits. In the mature cortex, acts primarily in brainstem raphe neurons to mediate serotonin uptake from the synaptic cleft back into the pre-synaptic terminal thus terminating serotonin signaling at the synapse. Modulates mucosal serotonin levels in the gastrointestinal tract through uptake and clearance of serotonin in enterocytes. Required for enteric neurogenesis and gastrointestinal reflexes. Regulates blood serotonin levels by ensuring rapid high affinity uptake of serotonin from plasma to platelets, where it is further stored in dense granules via vesicular monoamine transporters and then released upon stimulation. Mechanistically, the transport cycle starts with an outward-open conformation having Na1(+) and Cl(-) sites occupied. The binding of a second extracellular Na2(+) ion and serotonin substrate leads to structural changes to outward-occluded to inward-occluded to inward-open, where the Na2(+) ion and serotonin are released into the cytosol. Binding of intracellular K(+) ion induces conformational transitions to inward-occluded to outward-open and completes the cycle by releasing K(+) possibly together with a proton bound to Asp-98 into the extracellular compartment. Na1(+) and Cl(-) ions remain bound throughout the transport cycle. Additionally, displays serotonin-induced channel-like conductance for monovalent cations, mainly Na(+) ions. The channel activity is uncoupled from the transport cycle and may contribute to the membrane resting potential or excitability. In Macaca mulatta (Rhesus macaque), this protein is Sodium-dependent serotonin transporter (SLC6A4).